Consider the following 211-residue polypeptide: dITP/XTP pyrophosphatase (211 aa).

T13–K18 contributes to the substrate binding site. Residues D45 and D74 each coordinate Mg(2+). Residue D74 is the Proton acceptor of the active site. Residues S75, F160–D163, K183, and H195–R196 contribute to the substrate site.

The protein belongs to the HAM1 NTPase family. Homodimer. Requires Mg(2+) as cofactor.

The catalysed reaction is XTP + H2O = XMP + diphosphate + H(+). The enzyme catalyses dITP + H2O = dIMP + diphosphate + H(+). It catalyses the reaction ITP + H2O = IMP + diphosphate + H(+). Functionally, pyrophosphatase that catalyzes the hydrolysis of nucleoside triphosphates to their monophosphate derivatives, with a high preference for the non-canonical purine nucleotides XTP (xanthosine triphosphate), dITP (deoxyinosine triphosphate) and ITP. Seems to function as a house-cleaning enzyme that removes non-canonical purine nucleotides from the nucleotide pool, thus preventing their incorporation into DNA/RNA and avoiding chromosomal lesions. This is dITP/XTP pyrophosphatase from Bradyrhizobium diazoefficiens (strain JCM 10833 / BCRC 13528 / IAM 13628 / NBRC 14792 / USDA 110).